We begin with the raw amino-acid sequence, 288 residues long: MTDQATRFRLDIAYQGTDFAGWARQPDLRTVQGTLEEALATIFRCSGEPPSLTVAGRTDAGVHATGQVAHVDLSPEQVALLRRPHGKREPQLAHDALKRRVNGVLGPVPDVLVSRATEAPAGFDARFSALWRRYEYRVADRIALRDPLQRHRTAWVPNTLDVDAMDRGAHGMLGLHDFASYCKAREGATTIRTLQAFSWRRDAEGVLLGEVAADAFCHSMVRALVGACVEVGEGKLRPGDLVTLRDERQRTSAFKVMPARGLTLREVGYPVDAELGRRAEQTRGLRTL.

D59 serves as the catalytic Nucleophile. Y134 serves as a coordination point for substrate.

This sequence belongs to the tRNA pseudouridine synthase TruA family. As to quaternary structure, homodimer.

It catalyses the reaction uridine(38/39/40) in tRNA = pseudouridine(38/39/40) in tRNA. Formation of pseudouridine at positions 38, 39 and 40 in the anticodon stem and loop of transfer RNAs. The polypeptide is tRNA pseudouridine synthase A (Leifsonia xyli subsp. xyli (strain CTCB07)).